Here is a 239-residue protein sequence, read N- to C-terminus: Ribosomal RNA small subunit methyltransferase G (239 aa).

S-adenosyl-L-methionine contacts are provided by residues G77, F82, 128–129, and R146; that span reads AE. The disordered stretch occupies residues 214–239; the sequence is IDKKRQTPKKYPRKPGTPNKTPLLEK.

This sequence belongs to the methyltransferase superfamily. RNA methyltransferase RsmG family.

It is found in the cytoplasm. In terms of biological role, specifically methylates the N7 position of guanine in position 535 of 16S rRNA. This is Ribosomal RNA small subunit methyltransferase G from Staphylococcus aureus (strain Mu3 / ATCC 700698).